A 35-amino-acid chain; its full sequence is Photosystem I reaction center subunit Z (35 aa).

A helical transmembrane segment spans residues L10 to I30.

In terms of assembly, the G.violaceus PSI reaction center is composed of one copy each of PsaA,B,C,D,E,F,L,M and Z, and forms trimeric complexes.

The protein resides in the cell inner membrane. This chain is Photosystem I reaction center subunit Z (psaZ), found in Gloeobacter violaceus (strain ATCC 29082 / PCC 7421).